Reading from the N-terminus, the 203-residue chain is Proline-rich protein 1 (203 aa).

A signal peptide spans 1–20 (MMKLGLYLTLLFLSVWTVSG).

Component of the acid-insoluble and acid-soluble organic matrix of calcified layers of the shell (at protein level).

It localises to the secreted. The chain is Proline-rich protein 1 from Lottia gigantea (Giant owl limpet).